Here is a 396-residue protein sequence, read N- to C-terminus: tRNA-specific 2-thiouridylase MnmA (396 aa).

Residues 42 to 49 and M68 contribute to the ATP site; that span reads GMSGGVDS. The interaction with target base in tRNA stretch occupies residues 128-130; it reads NPD. C133 (nucleophile) is an active-site residue. C133 and C230 are oxidised to a cystine. G158 provides a ligand contact to ATP. An interaction with tRNA region spans residues 180-182; that stretch reads KDQ. The Cysteine persulfide intermediate role is filled by C230. Residues 342–343 are interaction with tRNA; the sequence is RY.

This sequence belongs to the MnmA/TRMU family.

It is found in the cytoplasm. The catalysed reaction is S-sulfanyl-L-cysteinyl-[protein] + uridine(34) in tRNA + AH2 + ATP = 2-thiouridine(34) in tRNA + L-cysteinyl-[protein] + A + AMP + diphosphate + H(+). Catalyzes the 2-thiolation of uridine at the wobble position (U34) of tRNA, leading to the formation of s(2)U34. In Pseudoalteromonas atlantica (strain T6c / ATCC BAA-1087), this protein is tRNA-specific 2-thiouridylase MnmA.